We begin with the raw amino-acid sequence, 496 residues long: Glycerol kinase (496 aa).

Residue Thr12 coordinates ADP. 3 residues coordinate ATP: Thr12, Thr13, and Ser14. A sn-glycerol 3-phosphate-binding site is contributed by Thr12. Arg16 lines the ADP pocket. Sn-glycerol 3-phosphate-binding residues include Arg82, Glu83, and Tyr134. Positions 82, 83, and 134 each coordinate glycerol. Residue His230 is modified to Phosphohistidine; by HPr. Sn-glycerol 3-phosphate is bound at residue Asp244. Positions 244 and 245 each coordinate glycerol. ADP contacts are provided by Thr266 and Gly309. Thr266, Gly309, Gln313, and Gly410 together coordinate ATP. The ADP site is built by Gly410 and Asn414.

This sequence belongs to the FGGY kinase family. The phosphoenolpyruvate-dependent sugar phosphotransferase system (PTS), including enzyme I, and histidine-containing protein (HPr) are required for the phosphorylation of, which leads to the activation of the enzyme.

It catalyses the reaction glycerol + ATP = sn-glycerol 3-phosphate + ADP + H(+). The protein operates within polyol metabolism; glycerol degradation via glycerol kinase pathway; sn-glycerol 3-phosphate from glycerol: step 1/1. Its activity is regulated as follows. Inhibited by fructose 1,6-bisphosphate and p-chloromercuribenzoate (PCMB). Its function is as follows. Key enzyme in the regulation of glycerol uptake and metabolism. Catalyzes the phosphorylation of glycerol to yield sn-glycerol 3-phosphate. This Thermus thermophilus protein is Glycerol kinase.